The chain runs to 197 residues: Phospholipid hydroperoxide glutathione peroxidase (197 aa).

Position 40 is a phosphoserine (Ser-40). Residue Sec-73 is part of the active site. Sec-73 is a non-standard amino acid (selenocysteine).

It belongs to the glutathione peroxidase family. Monomer. Has a tendency to form higher mass oligomers. Interacts with FUNDC1; this interaction promotes GPX4 recruitment into mitochondria through TOM/TIM complex where it is degraded by mitophagy. In terms of tissue distribution, expressed very intensively in the testis and weakly in lung, heart, and cerebellum.

It is found in the mitochondrion. The protein localises to the cytoplasm. The catalysed reaction is a hydroperoxy polyunsaturated fatty acid + 2 glutathione = a hydroxy polyunsaturated fatty acid + glutathione disulfide + H2O. It catalyses the reaction 2 glutathione + H2O2 = glutathione disulfide + 2 H2O. The enzyme catalyses tert-butyl hydroperoxide + 2 glutathione = tert-butanol + glutathione disulfide + H2O. It carries out the reaction cumene hydroperoxide + 2 glutathione = 2-phenylpropan-2-ol + glutathione disulfide + H2O. The catalysed reaction is (9S)-hydroperoxy-(10E,12Z)-octadecadienoate + 2 glutathione = (9S)-hydroxy-(10E,12Z)-octadecadienoate + glutathione disulfide + H2O. It catalyses the reaction (13S)-hydroperoxy-(9Z,11E)-octadecadienoate + 2 glutathione = (13S)-hydroxy-(9Z,11E)-octadecadienoate + glutathione disulfide + H2O. The enzyme catalyses (5S)-hydroperoxy-(6E,8Z,11Z,14Z)-eicosatetraenoate + 2 glutathione = (5S)-hydroxy-(6E,8Z,11Z,14Z)-eicosatetraenoate + glutathione disulfide + H2O. It carries out the reaction (12R)-hydroperoxy-(5Z,8Z,10E,14Z)-eicosatetraenoate + 2 glutathione = (12R)-hydroxy-(5Z,8Z,10E,14Z)-eicosatetraenoate + glutathione disulfide + H2O. The catalysed reaction is (12S)-hydroperoxy-(5Z,8Z,10E,14Z)-eicosatetraenoate + 2 glutathione = (12S)-hydroxy-(5Z,8Z,10E,14Z)-eicosatetraenoate + glutathione disulfide + H2O. It catalyses the reaction (15S)-hydroperoxy-(5Z,8Z,11Z,13E)-eicosatetraenoate + 2 glutathione = (15S)-hydroxy-(5Z,8Z,11Z,13E)-eicosatetraenoate + glutathione disulfide + H2O. The enzyme catalyses (5S)-hydroperoxy-(6E,8Z,11Z,14Z,17Z)-eicosapentaenoate + 2 glutathione = (5S)-hydroxy-(6E,8Z,11Z,14Z,17Z)-eicosapentaenoate + glutathione disulfide + H2O. It carries out the reaction (12S)-hydroperoxy-(5Z,8Z,10E,14Z,17Z)-eicosapentaenoate + 2 glutathione = (12S)-hydroxy-(5Z,8Z,10E,14Z,17Z)-eicosapentaenoate + glutathione disulfide + H2O. The catalysed reaction is (15S)-hydroperoxy-(5Z,8Z,11Z,13E,17Z)-eicosapentaenoate + 2 glutathione = (15S)-hydroxy-(5Z,8Z,11Z,13E,17Z)-eicosapentaenoate + glutathione disulfide + H2O. It catalyses the reaction (15S)-hydroperoxy-(11Z,13E)-eicosadienoate + 2 glutathione = (15S)-hydroxy-(11Z,13E)-eicosadienoate + glutathione disulfide + H2O. The enzyme catalyses (17S)-hydroperoxy-(4Z,7Z,10Z,13Z,15E,19Z)-docosahexaenoate + 2 glutathione = (17S)-hydroxy-(4Z,7Z,10Z,13Z,15E,19Z)-docosahexaenoate + glutathione disulfide + H2O. It carries out the reaction a hydroperoxy-1,2-diacyl-glycero-3-phosphocholine + 2 glutathione = a hydroxy-1,2-diacyl-glycero-3-phosphocholine + glutathione disulfide + H2O. In terms of biological role, essential antioxidant peroxidase that directly reduces phospholipid hydroperoxide even if they are incorporated in membranes and lipoproteins. Can also reduce fatty acid hydroperoxide, cholesterol hydroperoxide and thymine hydroperoxide. Plays a key role in protecting cells from oxidative damage by preventing membrane lipid peroxidation. Required to prevent cells from ferroptosis, a non-apoptotic cell death resulting from an iron-dependent accumulation of lipid reactive oxygen species. The presence of selenocysteine (Sec) versus Cys at the active site is essential for life: it provides resistance to overoxidation and prevents cells against ferroptosis. The presence of Sec at the active site is also essential for the survival of a specific type of parvalbumin-positive interneurons, thereby preventing against fatal epileptic seizures. May be required to protect cells from the toxicity of ingested lipid hydroperoxides. Required for normal sperm development and male fertility. Essential for maturation and survival of photoreceptor cells. Plays a role in a primary T-cell response to viral and parasitic infection by protecting T-cells from ferroptosis and by supporting T-cell expansion. Plays a role of glutathione peroxidase in platelets in the arachidonic acid metabolism. Reduces hydroperoxy ester lipids formed by a 15-lipoxygenase that may play a role as down-regulator of the cellular 15-lipoxygenase pathway. Can also reduce small soluble hydroperoxides such as H2O2, cumene hydroperoxide and tert-butyl hydroperoxide. The polypeptide is Phospholipid hydroperoxide glutathione peroxidase (Macaca fuscata fuscata (Japanese macaque)).